The primary structure comprises 336 residues: Mitochondrial thiamine diphosphate carrier 1 (336 aa).

A run of 6 helical transmembrane segments spans residues 11 to 27 (RRALVDSLAGAISGGIS), 88 to 105 (VPALFMYMPYTAIQFTVL), 127 to 150 (YLSYVSGAIAGCTATIGSYPFDLL), 182 to 199 (LYSGLSPTLVEIIPYAGL), 230 to 246 (SVSSFQLFLCGFAAGTF), and 303 to 322 (GLFPSLVKSAPAGAVTFVVY). Solcar repeat units lie at residues 11–111 (RRAL…LKTF), 124–210 (LSPY…FKRS), and 231–328 (VSSF…ISDW).

This sequence belongs to the mitochondrial carrier (TC 2.A.29) family. As to expression, ubiquitous with highest expression in pollen.

The protein localises to the mitochondrion inner membrane. Functionally, mitochondrial transporter that mediates uptake of thiamine diphosphate (ThDP) into mitochondria. This Zea mays (Maize) protein is Mitochondrial thiamine diphosphate carrier 1.